The primary structure comprises 523 residues: Solute carrier family 35 member F5 (523 aa).

Transmembrane regions (helical) follow at residues 69-89 (MALG…SSEL) and 101-121 (FFST…FIIW). Residue Ser207 is modified to Phosphoserine. Helical transmembrane passes span 243–263 (ISFF…EALS), 268–288 (AIVN…AAVF), 296–316 (FTLS…LVNL), 327–347 (TIGS…IVMI), 361–381 (MFFG…FFLL), 395–415 (VVLM…EFLW), 420–440 (FLTS…LSII), and 452–472 (WLFF…TLLC). An EamA domain is found at 252-316 (FLANLSYQEA…SIGGVVLVNL (65 aa)).

The protein belongs to the SLC35F solute transporter family.

The protein localises to the membrane. Putative solute transporter. This chain is Solute carrier family 35 member F5 (SLC35F5), found in Pongo abelii (Sumatran orangutan).